The primary structure comprises 189 residues: Chitin synthase 3 (189 aa).

This sequence belongs to the chitin synthase family. Class II subfamily.

It is found in the cell membrane. The enzyme catalyses [(1-&gt;4)-N-acetyl-beta-D-glucosaminyl](n) + UDP-N-acetyl-alpha-D-glucosamine = [(1-&gt;4)-N-acetyl-beta-D-glucosaminyl](n+1) + UDP + H(+). Its function is as follows. Polymerizes chitin, a structural polymer of the cell wall and septum, by transferring the sugar moiety of UDP-GlcNAc to the non-reducing end of the growing chitin polymer. The protein is Chitin synthase 3 (CHS3) of Ajellomyces capsulatus (Darling's disease fungus).